The following is a 763-amino-acid chain: Phosphoglycerol transferase I (763 aa).

The next 4 helical transmembrane spans lie at 1 to 21 (MSEL…AWKA), 26 to 46 (WWFA…ITLY), 77 to 97 (ILPG…LGWI), and 108 to 128 (VGYS…SPAF).

Belongs to the OpgB family.

Its subcellular location is the cell inner membrane. The catalysed reaction is a phosphatidylglycerol + a membrane-derived-oligosaccharide D-glucose = a 1,2-diacyl-sn-glycerol + a membrane-derived-oligosaccharide 6-(glycerophospho)-D-glucose.. It functions in the pathway glycan metabolism; osmoregulated periplasmic glucan (OPG) biosynthesis. Transfers a phosphoglycerol residue from phosphatidylglycerol to the membrane-bound nascent glucan backbones. This is Phosphoglycerol transferase I from Salmonella agona (strain SL483).